The following is a 283-amino-acid chain: ATP phosphoribosyltransferase (283 aa).

It belongs to the ATP phosphoribosyltransferase family. Long subfamily. Requires Mg(2+) as cofactor.

Its subcellular location is the cytoplasm. The catalysed reaction is 1-(5-phospho-beta-D-ribosyl)-ATP + diphosphate = 5-phospho-alpha-D-ribose 1-diphosphate + ATP. Its pathway is amino-acid biosynthesis; L-histidine biosynthesis; L-histidine from 5-phospho-alpha-D-ribose 1-diphosphate: step 1/9. Its activity is regulated as follows. Feedback inhibited by histidine. Catalyzes the condensation of ATP and 5-phosphoribose 1-diphosphate to form N'-(5'-phosphoribosyl)-ATP (PR-ATP). Has a crucial role in the pathway because the rate of histidine biosynthesis seems to be controlled primarily by regulation of HisG enzymatic activity. The polypeptide is ATP phosphoribosyltransferase (Phocaeicola vulgatus (strain ATCC 8482 / DSM 1447 / JCM 5826 / CCUG 4940 / NBRC 14291 / NCTC 11154) (Bacteroides vulgatus)).